Here is a 760-residue protein sequence, read N- to C-terminus: GLC7-interacting protein 4 (760 aa).

Disordered stretches follow at residues 449-573 (KKKP…SLQS) and 593-626 (KSASTPNPSASSSLAPSPKVSSINNTSSGKSSST). Low complexity-rich tracts occupy residues 454 to 474 (ITKLPASSSPSPSPTSSASPS) and 494 to 506 (SSRSPSVSPVRTT). Ser-497 and Ser-501 each carry phosphoserine. Basic and acidic residues predominate over residues 512 to 525 (AETKKSVVSPEKRK). Polar residues predominate over residues 534–554 (SSSLQSYTNKQQTSYLNSTRH). Low complexity-rich tracts occupy residues 561–573 (SKLNNQRSNSLQS) and 594–626 (SASTPNPSASSSLAPSPKVSSINNTSSGKSSST). The residue at position 609 (Ser-609) is a Phosphoserine.

This sequence belongs to the GIP4 family. As to quaternary structure, interacts with GLC7.

Its subcellular location is the cytoplasm. GLC7 phosphatase-regulatory protein involved in GLC7 subcellular redistribution and chromosome segregation. This Saccharomyces cerevisiae (strain ATCC 204508 / S288c) (Baker's yeast) protein is GLC7-interacting protein 4 (GIP4).